A 214-amino-acid chain; its full sequence is Triosephosphate isomerase (214 aa).

Asparagine 6–lysine 8 is a binding site for substrate. The active-site Electrophile is histidine 85. The active-site Proton acceptor is glutamate 133. Substrate-binding positions include isoleucine 138, glycine 173, and alanine 194 to serine 195.

This sequence belongs to the triosephosphate isomerase family. As to quaternary structure, homotetramer; dimer of dimers.

The protein resides in the cytoplasm. It carries out the reaction D-glyceraldehyde 3-phosphate = dihydroxyacetone phosphate. It functions in the pathway carbohydrate biosynthesis; gluconeogenesis. The protein operates within carbohydrate degradation; glycolysis; D-glyceraldehyde 3-phosphate from glycerone phosphate: step 1/1. Its function is as follows. Involved in the gluconeogenesis. Catalyzes stereospecifically the conversion of dihydroxyacetone phosphate (DHAP) to D-glyceraldehyde-3-phosphate (G3P). In Halobacterium salinarum (strain ATCC 700922 / JCM 11081 / NRC-1) (Halobacterium halobium), this protein is Triosephosphate isomerase.